A 56-amino-acid polypeptide reads, in one-letter code: UPF0291 protein Clos_1191 (56 aa).

This sequence belongs to the UPF0291 family.

The protein localises to the cytoplasm. This chain is UPF0291 protein Clos_1191, found in Alkaliphilus oremlandii (strain OhILAs) (Clostridium oremlandii (strain OhILAs)).